Reading from the N-terminus, the 57-residue chain is Large ribosomal subunit protein bL33 (57 aa).

Belongs to the bacterial ribosomal protein bL33 family.

This chain is Large ribosomal subunit protein bL33, found in Shewanella halifaxensis (strain HAW-EB4).